The primary structure comprises 298 residues: Succinate dehydrogenase [ubiquinone] iron-sulfur subunit, mitochondrial (298 aa).

Positions 59 to 147 (YRFNPEAPGA…STKIYPLPHM (89 aa)) constitute a 2Fe-2S ferredoxin-type domain. Positions 107, 112, 115, and 127 each coordinate [2Fe-2S] cluster. In terms of domain architecture, 4Fe-4S ferredoxin-type spans 190–220 (ERDRLDGLYECILCACCSTSCPSYWWNADKY). Residues Cys200, Cys203, and Cys206 each contribute to the [4Fe-4S] cluster site. A [3Fe-4S] cluster-binding site is contributed by Cys210. Trp215 is a binding site for a ubiquinone. 2 residues coordinate [3Fe-4S] cluster: Cys257 and Cys263. Cys267 lines the [4Fe-4S] cluster pocket.

Belongs to the succinate dehydrogenase/fumarate reductase iron-sulfur protein family. In terms of assembly, component of complex II composed of four subunits: a flavoprotein (FP), an iron-sulfur protein (IP), and a cytochrome b composed of a large and a small subunit. Requires [2Fe-2S] cluster as cofactor. It depends on [3Fe-4S] cluster as a cofactor. [4Fe-4S] cluster is required as a cofactor.

The protein resides in the mitochondrion inner membrane. The enzyme catalyses a quinone + succinate = fumarate + a quinol. It participates in carbohydrate metabolism; tricarboxylic acid cycle; fumarate from succinate (eukaryal route): step 1/1. In terms of biological role, iron-sulfur protein (IP) subunit of succinate dehydrogenase (SDH) that is involved in complex II of the mitochondrial electron transport chain and is responsible for transferring electrons from succinate to ubiquinone (coenzyme Q). The polypeptide is Succinate dehydrogenase [ubiquinone] iron-sulfur subunit, mitochondrial (sdhb-1) (Caenorhabditis elegans).